A 203-amino-acid chain; its full sequence is Holliday junction branch migration complex subunit RuvA (203 aa).

The interval 1–64 (MIGRLRGIIL…EDAQLLYGFN (64 aa)) is domain I. The segment at 65 to 142 (NKQERTLFKE…KGLHGDLFTP (78 aa)) is domain II. The interval 143 to 154 (AVDLVLTSPASP) is flexible linker. The domain III stretch occupies residues 155–203 (GSEDAEQEAVAALVALGYKPQEASRMVSKIARPDASSETLIRDALRAAL).

Belongs to the RuvA family. Homotetramer. Forms an RuvA(8)-RuvB(12)-Holliday junction (HJ) complex. HJ DNA is sandwiched between 2 RuvA tetramers; dsDNA enters through RuvA and exits via RuvB. An RuvB hexamer assembles on each DNA strand where it exits the tetramer. Each RuvB hexamer is contacted by two RuvA subunits (via domain III) on 2 adjacent RuvB subunits; this complex drives branch migration. In the full resolvosome a probable DNA-RuvA(4)-RuvB(12)-RuvC(2) complex forms which resolves the HJ.

Its subcellular location is the cytoplasm. Functionally, the RuvA-RuvB-RuvC complex processes Holliday junction (HJ) DNA during genetic recombination and DNA repair, while the RuvA-RuvB complex plays an important role in the rescue of blocked DNA replication forks via replication fork reversal (RFR). RuvA specifically binds to HJ cruciform DNA, conferring on it an open structure. The RuvB hexamer acts as an ATP-dependent pump, pulling dsDNA into and through the RuvAB complex. HJ branch migration allows RuvC to scan DNA until it finds its consensus sequence, where it cleaves and resolves the cruciform DNA. The sequence is that of Holliday junction branch migration complex subunit RuvA from Salmonella schwarzengrund (strain CVM19633).